A 412-amino-acid chain; its full sequence is Histidinol dehydrogenase (412 aa).

Residues Y118, Q176, and N199 each contribute to the NAD(+) site. The substrate site is built by T222, Q244, and H247. Residues Q244 and H247 each coordinate Zn(2+). Residues E311 and H312 each act as proton acceptor in the active site. Residues H312, D345, E399, and H404 each contribute to the substrate site. Residue D345 coordinates Zn(2+). H404 is a Zn(2+) binding site.

This sequence belongs to the histidinol dehydrogenase family. The cofactor is Zn(2+).

It carries out the reaction L-histidinol + 2 NAD(+) + H2O = L-histidine + 2 NADH + 3 H(+). It functions in the pathway amino-acid biosynthesis; L-histidine biosynthesis; L-histidine from 5-phospho-alpha-D-ribose 1-diphosphate: step 9/9. Functionally, catalyzes the sequential NAD-dependent oxidations of L-histidinol to L-histidinaldehyde and then to L-histidine. The chain is Histidinol dehydrogenase from Thermus thermophilus (strain ATCC BAA-163 / DSM 7039 / HB27).